We begin with the raw amino-acid sequence, 420 residues long: Probable acetate kinase (420 aa).

Residue N10 coordinates Mg(2+). Position 17 (K17) interacts with ATP. R97 serves as a coordination point for substrate. The active-site Proton donor/acceptor is D153. Position 213-217 (213-217 (HIGSG)) interacts with ATP. A Mg(2+)-binding site is contributed by E403.

The protein belongs to the acetokinase family. Requires Mg(2+) as cofactor.

It carries out the reaction acetate + ATP = acetyl phosphate + ADP. Its pathway is metabolic intermediate biosynthesis; acetyl-CoA biosynthesis; acetyl-CoA from acetate: step 1/2. The protein is Probable acetate kinase of Emericella nidulans (strain FGSC A4 / ATCC 38163 / CBS 112.46 / NRRL 194 / M139) (Aspergillus nidulans).